The primary structure comprises 177 residues: ATP synthase subunit delta (177 aa).

The protein belongs to the ATPase delta chain family. In terms of assembly, F-type ATPases have 2 components, F(1) - the catalytic core - and F(0) - the membrane proton channel. F(1) has five subunits: alpha(3), beta(3), gamma(1), delta(1), epsilon(1). F(0) has three main subunits: a(1), b(2) and c(10-14). The alpha and beta chains form an alternating ring which encloses part of the gamma chain. F(1) is attached to F(0) by a central stalk formed by the gamma and epsilon chains, while a peripheral stalk is formed by the delta and b chains.

It localises to the cell inner membrane. In terms of biological role, f(1)F(0) ATP synthase produces ATP from ADP in the presence of a proton or sodium gradient. F-type ATPases consist of two structural domains, F(1) containing the extramembraneous catalytic core and F(0) containing the membrane proton channel, linked together by a central stalk and a peripheral stalk. During catalysis, ATP synthesis in the catalytic domain of F(1) is coupled via a rotary mechanism of the central stalk subunits to proton translocation. Functionally, this protein is part of the stalk that links CF(0) to CF(1). It either transmits conformational changes from CF(0) to CF(1) or is implicated in proton conduction. This Shigella dysenteriae serotype 1 (strain Sd197) protein is ATP synthase subunit delta.